Reading from the N-terminus, the 85-residue chain is COMM domain-containing protein 6 (85 aa).

Met-1 is modified (N-acetylmethionine). Residues 18-85 (QLIDFEWKLG…KEIAAIIETV (68 aa)) enclose the COMM domain.

Belongs to the COMM domain-containing protein 6 family. Component of the commander complex consisting of the CCC subcomplex and the retriever subcomplex. Component of the CCC (COMMD/CCDC22/CCDC93) subcomplex consisting of COMMD1, COMMD2, COMMD3, COMMD4, COMMD5, COMMD6, COMMD7, COMMD8, COMMD9, COMMD10, CCDC22 and CCDC93; within the complex forms a heterodimer with COMMD1. May form a homodimer with isoform 1. Interacts with RELA, RELB, NFKB1/p105. Does not interact with NFKBIB. Interacts with CCDC22, CCDC93, SCNN1B, CUL4A.

It is found in the nucleus. It localises to the cytoplasm. Its function is as follows. Scaffold protein in the commander complex that is essential for endosomal recycling of transmembrane cargos; the commander complex is composed of the CCC subcomplex and the retriever subcomplex. May modulate activity of cullin-RING E3 ubiquitin ligase (CRL) complexes. Down-regulates activation of NF-kappa-B. Inhibits TNF-induced NFKB1 activation. In Bos taurus (Bovine), this protein is COMM domain-containing protein 6 (COMMD6).